The primary structure comprises 254 residues: Pimeloyl-[acyl-carrier protein] methyl ester esterase (254 aa).

One can recognise an AB hydrolase-1 domain in the interval 16–241 (LVLLHGWGMN…QSSHAPFMTE (226 aa)). Substrate-binding positions include Trp-22, 82 to 83 (SL), and 143 to 147 (FMALQ). The Nucleophile role is filled by Ser-82. Active-site residues include Asp-207 and His-235. His-235 contacts substrate.

This sequence belongs to the AB hydrolase superfamily. Carboxylesterase BioH family. As to quaternary structure, monomer.

The protein localises to the cytoplasm. It catalyses the reaction 6-carboxyhexanoyl-[ACP] methyl ester + H2O = 6-carboxyhexanoyl-[ACP] + methanol + H(+). Its pathway is cofactor biosynthesis; biotin biosynthesis. Its function is as follows. The physiological role of BioH is to remove the methyl group introduced by BioC when the pimeloyl moiety is complete. It allows to synthesize pimeloyl-ACP via the fatty acid synthetic pathway through the hydrolysis of the ester bonds of pimeloyl-ACP esters. This Vibrio campbellii (strain ATCC BAA-1116) protein is Pimeloyl-[acyl-carrier protein] methyl ester esterase.